The following is a 246-amino-acid chain: 1-(5-phosphoribosyl)-5-[(5-phosphoribosylamino)methylideneamino] imidazole-4-carboxamide isomerase (246 aa).

The Proton acceptor role is filled by aspartate 8. Aspartate 129 serves as the catalytic Proton donor.

It belongs to the HisA/HisF family.

It is found in the cytoplasm. The enzyme catalyses 1-(5-phospho-beta-D-ribosyl)-5-[(5-phospho-beta-D-ribosylamino)methylideneamino]imidazole-4-carboxamide = 5-[(5-phospho-1-deoxy-D-ribulos-1-ylimino)methylamino]-1-(5-phospho-beta-D-ribosyl)imidazole-4-carboxamide. Its pathway is amino-acid biosynthesis; L-histidine biosynthesis; L-histidine from 5-phospho-alpha-D-ribose 1-diphosphate: step 4/9. This is 1-(5-phosphoribosyl)-5-[(5-phosphoribosylamino)methylideneamino] imidazole-4-carboxamide isomerase from Methylocella silvestris (strain DSM 15510 / CIP 108128 / LMG 27833 / NCIMB 13906 / BL2).